We begin with the raw amino-acid sequence, 117 residues long: Large ribosomal subunit protein bL19 (117 aa).

It belongs to the bacterial ribosomal protein bL19 family.

This protein is located at the 30S-50S ribosomal subunit interface and may play a role in the structure and function of the aminoacyl-tRNA binding site. In Vibrio vulnificus (strain CMCP6), this protein is Large ribosomal subunit protein bL19.